A 530-amino-acid chain; its full sequence is Glutamyl-tRNA reductase 2, chloroplastic (530 aa).

Residues 1-64 (MAVSSAFVVT…RCEISPSNKA (64 aa)) constitute a chloroplast transit peptide. Residues 134 to 137 (TCNR), Ser-194, 199 to 201 (EGQ), and Gln-205 each bind substrate. Residue Cys-135 is the Nucleophile of the active site. Residue 277–282 (GAGKMG) participates in NADP(+) binding.

It belongs to the glutamyl-tRNA reductase family. In terms of tissue distribution, expressed in roots and flowers. Detected in leaves, hypocotyls and cotyledons.

The protein localises to the plastid. It localises to the chloroplast. The enzyme catalyses (S)-4-amino-5-oxopentanoate + tRNA(Glu) + NADP(+) = L-glutamyl-tRNA(Glu) + NADPH + H(+). It participates in porphyrin-containing compound metabolism; protoporphyrin-IX biosynthesis; 5-aminolevulinate from L-glutamyl-tRNA(Glu): step 1/2. The protein operates within porphyrin-containing compound metabolism; chlorophyll biosynthesis. Functionally, catalyzes the NADPH-dependent reduction of glutamyl-tRNA(Glu) to glutamate 1-semialdehyde (GSA). Probably involved in wound-induced supply of heme to defensive hemoproteins outside plastids. This chain is Glutamyl-tRNA reductase 2, chloroplastic (HEMA2), found in Arabidopsis thaliana (Mouse-ear cress).